Consider the following 971-residue polypeptide: Exportin-2 (971 aa).

Residues 29–102 enclose the Importin N-terminal domain; sequence AEKFLESVEG…KANIVNLMLS (74 aa).

Belongs to the XPO2/CSE1 family. Interacts with cftr.

The protein localises to the cytoplasm. It is found in the nucleus. In terms of biological role, export receptor for importin alpha. Mediates importin-alpha re-export from the nucleus to the cytoplasm after import substrates have been released into the nucleoplasm. Negatively regulates fluid secretion and plays a role in fluid homeostasis by down-regulating cftr activity. In Oreochromis niloticus (Nile tilapia), this protein is Exportin-2 (cse1l).